The following is a 384-amino-acid chain: Probable splicing factor YJU2B (384 aa).

Residues 1–28 are disordered; it reads MGERKGTNKYYPPDFDPAKHGSLNGYRN. Positions 183–212 form a coiled coil; the sequence is NSLLRSKFREEKKQIKEEEERDQALLTKAS. The tract at residues 275–331 is disordered; it reads GIRTKTPSVPGISPVSLGVVRRTSKEENKAEDKSVESPDGSRSRKAEGMCRKEETGC. The span at 297-331 shows a compositional bias: basic and acidic residues; it reads TSKEENKAEDKSVESPDGSRSRKAEGMCRKEETGC.

It belongs to the CWC16 family.

The protein localises to the nucleus. May be involved in mRNA splicing. This Xenopus laevis (African clawed frog) protein is Probable splicing factor YJU2B (yju2b).